Consider the following 257-residue polypeptide: UPF0246 protein Lcho_2652 (257 aa).

The protein belongs to the UPF0246 family.

This Leptothrix cholodnii (strain ATCC 51168 / LMG 8142 / SP-6) (Leptothrix discophora (strain SP-6)) protein is UPF0246 protein Lcho_2652.